The sequence spans 293 residues: 33 kDa chaperonin (293 aa).

Disulfide bonds link Cys237–Cys239 and Cys271–Cys274.

This sequence belongs to the HSP33 family. In terms of processing, under oxidizing conditions two disulfide bonds are formed involving the reactive cysteines. Under reducing conditions zinc is bound to the reactive cysteines and the protein is inactive.

The protein localises to the cytoplasm. In terms of biological role, redox regulated molecular chaperone. Protects both thermally unfolding and oxidatively damaged proteins from irreversible aggregation. Plays an important role in the bacterial defense system toward oxidative stress. The sequence is that of 33 kDa chaperonin from Haemophilus influenzae (strain 86-028NP).